We begin with the raw amino-acid sequence, 440 residues long: UPF0489 protein C5orf22 homolog (440 aa).

Residues 187–207 are disordered; the sequence is VEGSSSGIQSSTSESSEDGLM. Residues 188 to 200 are compositionally biased toward low complexity; it reads EGSSSGIQSSTSE.

The protein belongs to the UPF0489 family.

This is UPF0489 protein C5orf22 homolog from Xenopus tropicalis (Western clawed frog).